A 363-amino-acid chain; its full sequence is 3,4-dihydroxy-2-butanone 4-phosphate synthase (363 aa).

The tract at residues Met-1–Lys-201 is DHBP synthase. Residues Arg-27–Glu-28, Asp-32, Arg-140–Thr-144, and Glu-164 contribute to the D-ribulose 5-phosphate site. Glu-28 serves as a coordination point for Mg(2+). His-143 contributes to the Mg(2+) binding site. Residues Tyr-202–Ser-363 form a GTP cyclohydrolase II-like region.

In the N-terminal section; belongs to the DHBP synthase family. This sequence in the C-terminal section; belongs to the GTP cyclohydrolase II family. Requires Mg(2+) as cofactor. Mn(2+) serves as cofactor.

The catalysed reaction is D-ribulose 5-phosphate = (2S)-2-hydroxy-3-oxobutyl phosphate + formate + H(+). The protein operates within cofactor biosynthesis; riboflavin biosynthesis; 2-hydroxy-3-oxobutyl phosphate from D-ribulose 5-phosphate: step 1/1. Catalyzes the conversion of D-ribulose 5-phosphate to formate and 3,4-dihydroxy-2-butanone 4-phosphate. The chain is 3,4-dihydroxy-2-butanone 4-phosphate synthase (ribB) from Photobacterium phosphoreum.